Reading from the N-terminus, the 456-residue chain is MSSMDCATFPMHPKMDEQLARTFVINEEEEEKHIQKVQNAFLYYGPYACQRLKRSMDYLNSLSGEDQIMLAKYRGHLECVRTCIDRNQAVIREILRGRVLYPTDEATGDPSEFDEPPPNVRHGDMDQIDIPFDEADVEPLKILKAQSTLKLIARDWSTEGALEREQSYKPIIDSIVAYFKHSDFELKDIKILVPGAGLGRLTYELACLGYSCEGNEFSYFMLIASNFVLNLCDNENKYVLYPWVHQYVNNLRREDQVAPVRFPDVCPLKNPPKGHFEIAAGDFLEVYKTPNAYNCVATCFFIDCANNVIDFIRTIYKILVPGGIWVNLGPLLYHFSDVSGQNSIEPAFEDLCIIMESVGFVIEKSRTGIRTKYAQNPSSMKQSEYQSLFWVCRKPDLFEEQRGKRKASREPHDLIVREDSEEEGEQQPERNETEEKQQLKPLATANCETEIKEQPS.

S-adenosyl-L-methionine is bound by residues Arg-154, Gly-195, Glu-216, Asp-282, Phe-283, and Cys-299. The carnosine site is built by Asp-303, His-334, and Tyr-385. The segment covering 402–418 (RGKRKASREPHDLIVRE) has biased composition (basic and acidic residues). A disordered region spans residues 402 to 456 (RGKRKASREPHDLIVREDSEEEGEQQPERNETEEKQQLKPLATANCETEIKEQPS). 2 positions are modified to phosphoserine: Ser-408 and Ser-420. The span at 427–438 (QPERNETEEKQQ) shows a compositional bias: basic and acidic residues.

It belongs to the carnosine N-methyltransferase family. Associates with the GATOR2 complex; the interaction is probably direct and is inhibited by S-adenosyl-L-methionine binding. Associates with the GATOR1 complex; the interaction is probably indirect and mediated by the GATOR2 complex.

It catalyses the reaction carnosine + S-adenosyl-L-methionine = anserine + S-adenosyl-L-homocysteine + H(+). In terms of biological role, S-adenosyl-L-methionine-binding protein that acts as a sensor to signal methionine availability to the mTORC1 signaling pathway. Associates with the GATOR2 complex in the absence of methionine to inhibit mTORC1 signaling, but dissociates in the presence of the methionine derivative S-adenosyl-L-methionine; S-adenosyl-L-homocysteine binding does not induce dissociation. Required for mTORC1 pathway response to methionine starvation. Exerts a protective function on developing egg chambers by inhibiting mTORC1 signaling under starvation conditions. May also function as a N-methyltransferase that mediates the formation of anserine (beta-alanyl-N(Pi)-methyl-L-histidine) from carnosine. It is unclear whether this protein has retained N-methyltransferase activity or if it is an evolutionary intermediate whose substrate binding ability has been co-opted to function as a nutrient sensor for mTORC1 signaling. The chain is Carnosine N-methyltransferase unmet from Drosophila melanogaster (Fruit fly).